The following is a 410-amino-acid chain: Sensor-like histidine kinase SenX3 (410 aa).

2 helical membrane-spanning segments follow: residues 6–26 (ALLLAGVLSALALAVGGAVGM) and 46–66 (ITVSQMLQCIVTLMPLGAAVV). The region spanning 164–380 (NVSHELKTPV…TFTLALPALI (217 aa)) is the Histidine kinase domain. His-167 bears the Phosphohistidine; by autocatalysis mark. The segment at 385–410 (DDERPEQAREPELRSNRSQREEELSR) is disordered.

In terms of processing, autophosphorylated.

Its subcellular location is the cell membrane. It catalyses the reaction ATP + protein L-histidine = ADP + protein N-phospho-L-histidine.. Member of the two-component regulatory system SenX3/RegX3. Autophosphorylates, and then transfers the phosphate group to RegX3. This is Sensor-like histidine kinase SenX3 from Mycobacterium bovis (strain ATCC BAA-935 / AF2122/97).